The primary structure comprises 84 residues: Small ribosomal subunit protein bS16 (84 aa).

This sequence belongs to the bacterial ribosomal protein bS16 family.

The protein is Small ribosomal subunit protein bS16 of Dechloromonas aromatica (strain RCB).